The chain runs to 326 residues: MRFTPLFLLAAVAIASPAPDLNARHELTRRQASESCPIGYCTQNGGTTGGAAGDTVTVTNLADLTEAAESDGPLTIIVSGSISGSAKIRVASDKTIFGESGSSITGIGFYIRRVSNVIMRNLKISKVDADNGDAIGIDASSNVWVDHCDLSGDLSGGKDDLDGLVDISHGAEWITVSNTYFHDHWKGSLIGHSDNNEDEDLGHLHVTYANNYWYNVYSRTPLIRFATVHIINNYWDSLIDTGVNCRMDAQVLIQSSAFHNCPDRAIFFADSDYTGYAVVDDVDLGGSSNSVPEGTLTPSSLPYAAITALGSGQVASVIPGTAGQKL.

Positions 1-15 (MRFTPLFLLAAVAIA) are cleaved as a signal peptide. Ca(2+) is bound by residues D133, D162, and D166. Residue R219 is part of the active site.

It belongs to the polysaccharide lyase 1 family. Requires Ca(2+) as cofactor.

The protein localises to the secreted. It catalyses the reaction Eliminative cleavage of (1-&gt;4)-alpha-D-galacturonan to give oligosaccharides with 4-deoxy-alpha-D-galact-4-enuronosyl groups at their non-reducing ends.. It functions in the pathway glycan metabolism; pectin degradation; 2-dehydro-3-deoxy-D-gluconate from pectin: step 2/5. In terms of biological role, pectinolytic enzyme consist of four classes of enzymes: pectin lyase, polygalacturonase, pectin methylesterase and rhamnogalacturonase. Among pectinolytic enzymes, pectin lyase is the most important in depolymerization of pectin, since it cleaves internal glycosidic bonds of highly methylated pectins. This is Pectate lyase plyB (plyB) from Emericella nidulans (strain FGSC A4 / ATCC 38163 / CBS 112.46 / NRRL 194 / M139) (Aspergillus nidulans).